Reading from the N-terminus, the 70-residue chain is Large ribosomal subunit protein bL32c (70 aa).

Disordered regions lie at residues 1–20 (MAVP…KNVR) and 51–70 (NDDS…LDDP). Residues 52–61 (DDSSGSSESK) show a composition bias toward polar residues.

Belongs to the bacterial ribosomal protein bL32 family.

It localises to the plastid. It is found in the chloroplast. The protein is Large ribosomal subunit protein bL32c (rpl32) of Pinus thunbergii (Japanese black pine).